A 345-amino-acid chain; its full sequence is MQLSDFSFELPDELIARYPLETRSASRLLHLDAKGQYHDHMFTDIIDLFEEGDLLVLNDTKVMKARLKGKRATGGAIEILVERMLNHTTAYCHIKASNSPKAGAELFVGADNIPVIVRGRHENLFVVEFSQPILPVLEQYGQLPIPPYFNREAEEIDTERYQTVFHNPEKIASVAAPTASLHFDEELLAELDQKGVKKTFVTLHVGAGTFMPVRTDDITNHVMHSEWCDVPQETIDLILATKARGNKVIAVGTTATRALESAAQAHGGKIAAWTGDTQIFIYPGYEFCIVDRLITNFHLPESTLLMLVSALSNRENILAAYEHAVKDRYRFFSYGDAMLIDKLEV.

It belongs to the QueA family. As to quaternary structure, monomer.

It is found in the cytoplasm. It carries out the reaction 7-aminomethyl-7-carbaguanosine(34) in tRNA + S-adenosyl-L-methionine = epoxyqueuosine(34) in tRNA + adenine + L-methionine + 2 H(+). The protein operates within tRNA modification; tRNA-queuosine biosynthesis. Functionally, transfers and isomerizes the ribose moiety from AdoMet to the 7-aminomethyl group of 7-deazaguanine (preQ1-tRNA) to give epoxyqueuosine (oQ-tRNA). This Acinetobacter baumannii (strain AB0057) protein is S-adenosylmethionine:tRNA ribosyltransferase-isomerase.